The sequence spans 512 residues: ETS translocation variant 3 (512 aa).

The ETS DNA-binding region spans 35–116; the sequence is IQLWHFILEL…KGKRFTYKFN (82 aa). Residues 136-222 are disordered; sequence VPQSAPPVPT…NAIGGGGIGH (87 aa). Phosphoserine occurs at positions 139, 159, and 315. The segment covering 158–184 has biased composition (polar residues); it reads HSPTNDVQPGRFSASSLTASGQESSNG. A disordered region spans residues 336 to 512; the sequence is PEESTQFSIK…QGLATAAADA (177 aa). Residues 380–406 show a composition bias toward basic and acidic residues; that stretch reads IKVEPASEKDPESLRQSAREKEEHTQE. A Glycyl lysine isopeptide (Lys-Gly) (interchain with G-Cter in SUMO2) cross-link involves residue Lys381. At Lys388 the chain carries N6-acetyllysine; alternate. Lys388 is covalently cross-linked (Glycyl lysine isopeptide (Lys-Gly) (interchain with G-Cter in SUMO2); alternate). Residues 443 to 452 show a composition bias toward acidic residues; the sequence is EPLEVTEDIE. 2 stretches are compositionally biased toward basic and acidic residues: residues 453-468 and 479-491; these read DRPGKEPSAPEKKEDA and RWNDDPEARELSK.

Belongs to the ETS family.

It is found in the nucleus. Transcriptional repressor that contribute to growth arrest during terminal macrophage differentiation by repressing target genes involved in Ras-dependent proliferation. Represses MMP1 promoter activity. This is ETS translocation variant 3 (ETV3) from Pan paniscus (Pygmy chimpanzee).